We begin with the raw amino-acid sequence, 805 residues long: Mitochondrial inner membrane m-AAA protease component AFG3L2 (805 aa).

The N-terminal 39 residues, 1 to 39 (MAHRCLLLWGRGACRPRGMPPMLLPGGRTGSTERLYLRM), are a transit peptide targeting the mitochondrion. The propeptide at 40–67 (LYRYATTQAKTSRNSLLTDVIAAYQRLC) is removed in mature form. The segment at 74–127 (FEKYFPNGKNGKKTSEPKEVMGEKKEPKPAAAPRPSGGGVGGGGKRGGKKDDSH) is disordered. Basic and acidic residues predominate over residues 86–101 (KTSEPKEVMGEKKEPK). The segment covering 109–118 (SGGGVGGGGK) has biased composition (gly residues). Lys118 bears the N6-succinyllysine mark. 2 helical membrane passes run 144–164 (FKMY…YFLF) and 252–272 (GSFL…LYTI). 8 residues coordinate ATP: Val311, Ala312, Thr353, Gly354, Lys355, Thr356, Leu357, and His491. His575 contributes to the Zn(2+) binding site. The active site involves Glu576. Positions 579 and 650 each coordinate Zn(2+). The tract at residues 760 to 805 (FVEGTGSLDEDTSLPEGLKDWNREREGSEEPSGEKVTSPVQGAGPA) is disordered. The span at 776–787 (GLKDWNREREGS) shows a compositional bias: basic and acidic residues.

It in the N-terminal section; belongs to the AAA ATPase family. In the C-terminal section; belongs to the peptidase M41 family. Homohexamer. Forms heterohexamers with SPG7. The m-AAA protease is either composed of homohexamers of AFG3L2 or heterohexamers of AFG3L2 and SPG7. Interacts with MAIP1. Interacts with DNAJC19. Interacts with PHB2. Zn(2+) serves as cofactor. Upon import into the mitochondrion, the N-terminal transit peptide is cleaved to generate an intermediate form which undergoes autocatalytic proteolytic processing to generate the proteolytically active mature form.

It is found in the mitochondrion inner membrane. The enzyme catalyses ATP + H2O = ADP + phosphate + H(+). Functionally, catalytic component of the m-AAA protease, a protease that plays a key role in proteostasis of inner mitochondrial membrane proteins, and which is essential for axonal and neuron development. AFG3L2 possesses both ATPase and protease activities: the ATPase activity is required to unfold substrates, threading them into the internal proteolytic cavity for hydrolysis into small peptide fragments. The m-AAA protease carries out protein quality control in the inner membrane of the mitochondria by mediating degradation of mistranslated or misfolded polypeptides. The m-AAA protease complex also promotes the processing and maturation of mitochondrial proteins, such as MRPL32/bL32m, PINK1 and SP7. Mediates protein maturation of the mitochondrial ribosomal subunit MRPL32/bL32m by catalyzing the cleavage of the presequence of MRPL32/bL32m prior to assembly into the mitochondrial ribosome. Required for SPG7 maturation into its active mature form after SPG7 cleavage by mitochondrial-processing peptidase (MPP). Required for the maturation of PINK1 into its 52kDa mature form after its cleavage by mitochondrial-processing peptidase (MPP). Acts as a regulator of calcium in neurons by mediating degradation of SMDT1/EMRE before its assembly with the uniporter complex, limiting the availability of SMDT1/EMRE for MCU assembly and promoting efficient assembly of gatekeeper subunits with MCU. Promotes the proteolytic degradation of GHITM upon hyperpolarization of mitochondria: progressive GHITM degradation leads to respiratory complex I degradation and broad reshaping of the mitochondrial proteome by AFG3L2. Also acts as a regulator of mitochondrial glutathione homeostasis by mediating cleavage and degradation of SLC25A39. SLC25A39 cleavage is prevented when SLC25A39 binds iron-sulfur. Involved in the regulation of OMA1-dependent processing of OPA1. May act by mediating processing of OMA1 precursor, participating in OMA1 maturation. In Bos taurus (Bovine), this protein is Mitochondrial inner membrane m-AAA protease component AFG3L2 (AFG3L2).